The sequence spans 153 residues: Transcriptional regulator MraZ (153 aa).

2 SpoVT-AbrB domains span residues 7–61 and 90–133; these read KEKH…LPDV and LEMV…EPGR.

Belongs to the MraZ family. In terms of assembly, forms oligomers.

It localises to the cytoplasm. The protein resides in the nucleoid. In Chlorobium luteolum (strain DSM 273 / BCRC 81028 / 2530) (Pelodictyon luteolum), this protein is Transcriptional regulator MraZ.